Consider the following 102-residue polypeptide: Small ribosomal subunit protein uS10 (102 aa).

It belongs to the universal ribosomal protein uS10 family. Part of the 30S ribosomal subunit.

Functionally, involved in the binding of tRNA to the ribosomes. In Acidothermus cellulolyticus (strain ATCC 43068 / DSM 8971 / 11B), this protein is Small ribosomal subunit protein uS10.